The chain runs to 673 residues: UvrABC system protein B (673 aa).

The Helicase ATP-binding domain occupies 26 to 183; it reads EGLEDGLAHQ…RRLAELQYTR (158 aa). An ATP-binding site is contributed by 39 to 46; sequence GVTGSGKT. The short motif at 92-115 is the Beta-hairpin element; that stretch reads YYDYYQPEAYVPSSDTFIEKDASV. Residues 431 to 597 form the Helicase C-terminal domain; sequence QVDDLLSEIR…GLNKKVVDIL (167 aa). Positions 633–668 constitute a UVR domain; that stretch reads QQKIHELEGQMMQHAQNLEFEEAAQIRDQLHQLREL.

Belongs to the UvrB family. As to quaternary structure, forms a heterotetramer with UvrA during the search for lesions. Interacts with UvrC in an incision complex.

The protein resides in the cytoplasm. Its function is as follows. The UvrABC repair system catalyzes the recognition and processing of DNA lesions. A damage recognition complex composed of 2 UvrA and 2 UvrB subunits scans DNA for abnormalities. Upon binding of the UvrA(2)B(2) complex to a putative damaged site, the DNA wraps around one UvrB monomer. DNA wrap is dependent on ATP binding by UvrB and probably causes local melting of the DNA helix, facilitating insertion of UvrB beta-hairpin between the DNA strands. Then UvrB probes one DNA strand for the presence of a lesion. If a lesion is found the UvrA subunits dissociate and the UvrB-DNA preincision complex is formed. This complex is subsequently bound by UvrC and the second UvrB is released. If no lesion is found, the DNA wraps around the other UvrB subunit that will check the other stand for damage. This chain is UvrABC system protein B, found in Klebsiella pneumoniae subsp. pneumoniae (strain ATCC 700721 / MGH 78578).